Consider the following 394-residue polypeptide: Protein-glutamate methylesterase/protein-glutamine glutaminase (394 aa).

Residues 1–24 (MSDGFGRPPPPAPAGHPTGAAGGD) form a disordered region. A compositionally biased stretch (low complexity) spans 15–24 (GHPTGAAGGD). The Response regulatory domain occupies 27–145 (RVMVVDDSAV…EIGGADAFKR (119 aa)). Aspartate 78 is modified (4-aspartylphosphate). The CheB-type methylesterase domain occupies 191–393 (PAPAVGSVGQ…PYIRKFASRA (203 aa)). Residues serine 211, histidine 238, and aspartate 335 contribute to the active site.

This sequence belongs to the CheB family. In terms of processing, phosphorylated by CheA. Phosphorylation of the N-terminal regulatory domain activates the methylesterase activity.

It is found in the cytoplasm. The enzyme catalyses [protein]-L-glutamate 5-O-methyl ester + H2O = L-glutamyl-[protein] + methanol + H(+). It catalyses the reaction L-glutaminyl-[protein] + H2O = L-glutamyl-[protein] + NH4(+). Functionally, involved in chemotaxis. Part of a chemotaxis signal transduction system that modulates chemotaxis in response to various stimuli. Catalyzes the demethylation of specific methylglutamate residues introduced into the chemoreceptors (methyl-accepting chemotaxis proteins or MCP) by CheR. Also mediates the irreversible deamidation of specific glutamine residues to glutamic acid. This is Protein-glutamate methylesterase/protein-glutamine glutaminase from Azospirillum brasilense.